Reading from the N-terminus, the 302-residue chain is tRNA pseudouridine synthase B (302 aa).

Asp38 serves as the catalytic Nucleophile.

This sequence belongs to the pseudouridine synthase TruB family. Type 1 subfamily.

The enzyme catalyses uridine(55) in tRNA = pseudouridine(55) in tRNA. Responsible for synthesis of pseudouridine from uracil-55 in the psi GC loop of transfer RNAs. The sequence is that of tRNA pseudouridine synthase B from Geobacillus thermodenitrificans (strain NG80-2).